Reading from the N-terminus, the 458-residue chain is Argininosuccinate lyase (458 aa).

Belongs to the lyase 1 family. Argininosuccinate lyase subfamily.

The protein resides in the cytoplasm. It carries out the reaction 2-(N(omega)-L-arginino)succinate = fumarate + L-arginine. It participates in amino-acid biosynthesis; L-arginine biosynthesis; L-arginine from L-ornithine and carbamoyl phosphate: step 3/3. This chain is Argininosuccinate lyase, found in Geobacter metallireducens (strain ATCC 53774 / DSM 7210 / GS-15).